We begin with the raw amino-acid sequence, 1291 residues long: DNA-directed RNA polymerase subunit beta (1291 aa).

Belongs to the RNA polymerase beta chain family. In terms of assembly, the RNAP catalytic core consists of 2 alpha, 1 beta, 1 beta' and 1 omega subunit. When a sigma factor is associated with the core the holoenzyme is formed, which can initiate transcription.

The catalysed reaction is RNA(n) + a ribonucleoside 5'-triphosphate = RNA(n+1) + diphosphate. DNA-dependent RNA polymerase catalyzes the transcription of DNA into RNA using the four ribonucleoside triphosphates as substrates. The chain is DNA-directed RNA polymerase subunit beta from Mycoplasma mycoides subsp. mycoides SC (strain CCUG 32753 / NCTC 10114 / PG1).